The primary structure comprises 404 residues: MQYSEIMVRYGELSTKGKNRMRFINKLKRNIQAVLSVYPKVHVKADRDRTHVYLHGTDYQPVAESLKQIFGIQNFSPSYKIEKSVPALIEAVQSIMKEVYQEGMTFKITSKRSDHSFELDSRELNQTLGDAVFEAIPNVQVKMKAPDIELRVEIREEAAYISYETIRGAGGLPVGTSGKGMLMLSGGIDSPVAGYLALKRGVDIEAVHFASPPYTSPGALKKAQDLTRKLTKFGGNIQFIEVPFTEIQEEIKAKAPEAYLMTLTRRFMMRITDRIREERSAQVIINGESLGQVASQTIESMQAINAVTNTPVIRPVVTMDKLEIIDIAEKIDTFQISIQPFEDCCTIFAPDRPKTNPKIKNAEKYETYLDVEGLVERAVAGIMITEITPQAETDEVDELIEGLL.

Residues 60–165 (QPVAESLKQI…EEAAYISYET (106 aa)) form the THUMP domain. ATP-binding positions include 183-184 (ML), 208-209 (HF), Arg265, Gly287, and Gln296.

This sequence belongs to the ThiI family.

It localises to the cytoplasm. The catalysed reaction is [ThiI sulfur-carrier protein]-S-sulfanyl-L-cysteine + a uridine in tRNA + 2 reduced [2Fe-2S]-[ferredoxin] + ATP + H(+) = [ThiI sulfur-carrier protein]-L-cysteine + a 4-thiouridine in tRNA + 2 oxidized [2Fe-2S]-[ferredoxin] + AMP + diphosphate. It catalyses the reaction [ThiS sulfur-carrier protein]-C-terminal Gly-Gly-AMP + S-sulfanyl-L-cysteinyl-[cysteine desulfurase] + AH2 = [ThiS sulfur-carrier protein]-C-terminal-Gly-aminoethanethioate + L-cysteinyl-[cysteine desulfurase] + A + AMP + 2 H(+). Its pathway is cofactor biosynthesis; thiamine diphosphate biosynthesis. In terms of biological role, catalyzes the ATP-dependent transfer of a sulfur to tRNA to produce 4-thiouridine in position 8 of tRNAs, which functions as a near-UV photosensor. Also catalyzes the transfer of sulfur to the sulfur carrier protein ThiS, forming ThiS-thiocarboxylate. This is a step in the synthesis of thiazole, in the thiamine biosynthesis pathway. The sulfur is donated as persulfide by IscS. In Streptococcus sanguinis (strain SK36), this protein is Probable tRNA sulfurtransferase.